The sequence spans 101 residues: MAGGYGVMADDGTIDYSVHEAWNEATNVYLIVILVSIGLFMYARKNKRKIMRIFTVPPTAESATEANFYDDMKKIRLRQQLEMYYIARKHEQNDSIQLTVE.

Residues 25–43 traverse the membrane as a helical segment; sequence ATNVYLIVILVSIGLFMYA.

This sequence belongs to the SMIM19 family.

It localises to the membrane. The chain is Small integral membrane protein 19 (smim19) from Xenopus tropicalis (Western clawed frog).